The primary structure comprises 455 residues: Tryptophan dimethylallyltransferase (455 aa).

L-tryptophan contacts are provided by residues 79-80 and E88; that span reads VL. Substrate-binding residues include R99, K186, and Y188. Residues Y190 and R256 each contribute to the L-tryptophan site. Substrate-binding residues include R269, K271, Y273, Q355, Y357, Y421, and Y425.

Belongs to the tryptophan dimethylallyltransferase family. As to quaternary structure, homodimer.

The enzyme catalyses L-tryptophan + dimethylallyl diphosphate = 4-(3-methylbut-2-enyl)-L-tryptophan + diphosphate. The protein operates within alkaloid biosynthesis; ergot alkaloid biosynthesis. Its function is as follows. Tryptophan dimethylallyltransferase; part of the gene cluster that mediates the biosynthesis of fungal ergot alkaloid. DmaW catalyzes the first step of ergot alkaloid biosynthesis by condensing dimethylallyl diphosphate (DMAP) and tryptophan to form 4-dimethylallyl-L-tryptophan. The second step is catalyzed by the methyltransferase easF that methylates 4-dimethylallyl-L-tryptophan in the presence of S-adenosyl-L-methionine, resulting in the formation of 4-dimethylallyl-L-abrine. The catalase easC and the FAD-dependent oxidoreductase easE then transform 4-dimethylallyl-L-abrine to chanoclavine-I which is further oxidized by easD in the presence of NAD(+), resulting in the formation of chanoclavine-I aldehyde. Agroclavine dehydrogenase easG then mediates the conversion of chanoclavine-I aldehyde to agroclavine via a non-enzymatic adduct reaction: the substrate is an iminium intermediate that is formed spontaneously from chanoclavine-I aldehyde in the presence of glutathione. Further conversion of agroclavine to paspalic acid is a two-step process involving oxidation of agroclavine to elymoclavine and of elymoclavine to paspalic acid, the second step being performed by the elymoclavine oxidase cloA. However, cloA does not encode a functional enzyme indicating that C.fusiformis terminates its ergot alkaloid pathway at elymoclavine. The protein is Tryptophan dimethylallyltransferase of Claviceps fusiformis (Ergot fungus).